A 210-amino-acid chain; its full sequence is MSLGLVGRKCGMTRIFTEDGVSIPVTVVQVESNKVTQIKTTETDGYNAIQVTTGFKKRSNVNKPMAGHYAKASVEPGRGLWEFAIDNASDYEVGASIDATIFEAGQKVDVRGVSKGKGFQGGVKRHNFATQDATHGNSLSHRVHGSTGQNQTPGRVFKNKKMAGHLGSENVTIQSLEVVRVDAENGLLLLKGGIPGSVGGDVIVTPAVKS.

The tract at residues 133–152 (ATHGNSLSHRVHGSTGQNQT) is disordered. The residue at position 151 (Q151) is an N5-methylglutamine.

This sequence belongs to the universal ribosomal protein uL3 family. As to quaternary structure, part of the 50S ribosomal subunit. Forms a cluster with proteins L14 and L19. Methylated by PrmB.

Its function is as follows. One of the primary rRNA binding proteins, it binds directly near the 3'-end of the 23S rRNA, where it nucleates assembly of the 50S subunit. The protein is Large ribosomal subunit protein uL3 of Francisella philomiragia subsp. philomiragia (strain ATCC 25017 / CCUG 19701 / FSC 153 / O#319-036).